The primary structure comprises 1059 residues: Microtubule-associated protein 1S (1059 aa).

Residues 1–797 form a necessary for the microtubule-organizing center localization region; the sequence is MAAVAGSGAA…SESLPTLSDS (797 aa). 2 positions are modified to phosphoserine: serine 321 and serine 472. 2 disordered regions span residues 461–733 and 751–942; these read PQDL…ASPH and VPMA…SATP. 2 stretches are compositionally biased toward basic and acidic residues: residues 466–486 and 494–530; these read GPGR…KREG and PGQE…KDPK. Residues 547 to 557 are compositionally biased toward polar residues; sequence SVPNLKKTNAQ. Phosphoserine is present on serine 582. A compositionally biased stretch (low complexity) spans 591-603; the sequence is ASPPSAACGSPAS. Threonine 638 carries the phosphothreonine modification. The residue at position 640 (serine 640) is a Phosphoserine. Residues 642-652 show a composition bias toward basic and acidic residues; it reads ESHRSPAEGSE. Residues serine 655 and serine 657 each carry the phosphoserine modification. The interval 666 to 1059 is necessary for interaction with RASSF1 isoform A and isoform C; that stretch reads PDASPTVTTP…DAFPACKVEF (394 aa). Residues 670 to 680 are compositionally biased toward low complexity; it reads PTVTTPTVTTP. Residues 714-966 form a necessary for association with microtubules region; it reads EAGLSLPLRG…GSSAHLVDEE (253 aa). Serine 731 and serine 759 each carry phosphoserine. A compositionally biased stretch (low complexity) spans 759-769; sequence SPGSSNDSSAR. The segment covering 783–796 has biased composition (polar residues); it reads PPTSVSESLPTLSD. Serine 809 is subject to Phosphoserine. Over residues 825–836 the composition is skewed to pro residues; sequence PDPLKVPPPLPD. 2 stretches are compositionally biased toward low complexity: residues 873 to 887 and 923 to 936; these read AAAP…AKTK and TATR…SSRP. The tract at residues 960–1059 is necessary for association with actin; that stretch reads AHLVDEEFFQ…DAFPACKVEF (100 aa). The tract at residues 967 to 991 is necessary for the mitochondrial aggregation and genome destruction; the sequence is FFQRVRALCYVISGQDQRKEEGMRA.

Belongs to the MAP1 family. Heterodimer of a heavy and a light chain. Interacts with microtubules and actin. Both MAP1S heavy and light chains interact with microtubules. MAP1S light chain interacts with actin. Interacts (via C-terminus) with GAN (via Kelch domains). Interacts with ESR1, LRPPRC, RASSF1 isoform A and isoform C, microtubules and VCY2. Interacts with WDR47 (via N-terminus of light chain). As to expression, expressed in neurons (at protein level). Expressed in spermatocytes, spermatids and spermatozoa. Expressed in the cerebral cortex. Highly expressed in testis. Moderately expressed in the brain, colon, heart, kidney, liver, lung, placenta, small intestine, spleen and stomach. Weakly expressed in muscle.

The protein localises to the nucleus. The protein resides in the cytoplasm. It localises to the cytosol. It is found in the cytoskeleton. Its subcellular location is the spindle. In terms of biological role, microtubule-associated protein that mediates aggregation of mitochondria resulting in cell death and genomic destruction (MAGD). Plays a role in anchoring the microtubule organizing center to the centrosomes. Binds to DNA. Plays a role in apoptosis. Involved in the formation of microtubule bundles. The polypeptide is Microtubule-associated protein 1S (MAP1S) (Homo sapiens (Human)).